Reading from the N-terminus, the 331-residue chain is tRNA U34 carboxymethyltransferase (331 aa).

Carboxy-S-adenosyl-L-methionine contacts are provided by residues Lys-91, Trp-105, Lys-110, Gly-130, 152–154, 181–182, Met-196, Tyr-200, and Arg-315; these read DPS and IE.

Belongs to the class I-like SAM-binding methyltransferase superfamily. CmoB family. As to quaternary structure, homotetramer.

It carries out the reaction carboxy-S-adenosyl-L-methionine + 5-hydroxyuridine(34) in tRNA = 5-carboxymethoxyuridine(34) in tRNA + S-adenosyl-L-homocysteine + H(+). Its function is as follows. Catalyzes carboxymethyl transfer from carboxy-S-adenosyl-L-methionine (Cx-SAM) to 5-hydroxyuridine (ho5U) to form 5-carboxymethoxyuridine (cmo5U) at position 34 in tRNAs. The sequence is that of tRNA U34 carboxymethyltransferase from Shewanella baltica (strain OS185).